Reading from the N-terminus, the 256-residue chain is uncharacterized protein (256 aa).

Residues 1 to 23 (MKRLNKLVLGIIFLFLVISITAG) form the signal peptide. Cys24 is lipidated: N-palmitoyl cysteine. Cys24 carries the S-diacylglycerol cysteine lipid modification.

The protein belongs to the staphylococcal tandem lipoprotein family.

The protein resides in the cell membrane. This is an uncharacterized protein from Staphylococcus aureus (strain COL).